A 656-amino-acid polypeptide reads, in one-letter code: MEASYESESESESEAGPGTQRPGTGTVSAAVREHLRKLCLREFPCGAGSWNKSRFLPQTWRTWRELVPREEDVVSPGEETVEALLGLVRSRHSPWALLNNSNAEDSFLRELAIRNPLTITDTFFYSYFRSLRVIDKKVTLVDKDLLKFLKLEELVLSANRIKEVDATNLPPTLKVLELYGNEISSMECLCAHPPAGLQHLGLGHNKLLGPLESLYVTANHWPNLVSLDLGFNDLTDLQSMVTSLRTLRHLRLLVLQGNPLALVPYYRGLTIDSLAQLCVLDDITVSPNEKHLFRGLSLNGDLLAQEAQFVVTIGNIRGVLDTSVLDPEPRPEGPFITYNYYVTYDFVKDEEGEMNESAGVLAEIVKPSPSLELLVEESPEEVVEDVIEDIVEEVTEEVEGSLESEVEESGESELSVISGPSTILQMPRASAEELAKLRLRIDPRLCPSPGTVLFSTAHKPWAEVIPCSYEMQHSLRDLVPLKAFLLAGTTVTIVEEKILSWPVVLPAVDSPLSAKKGKGEKDKKGKEKDRTGKGEKEPAKEWKVLKKKKEPPKELRQDPPILQVLGRGLVILEPLLAGEPLVSTVCNFGVVRTLTSDRLTLARDSKKIKKVAKKEKPKAVIPIYEGDYHPEPLTVEVQIQLNQCRSAEEALRMFAV.

Acidic residues predominate over residues 1-13 (MEASYESESESES). The interval 1-25 (MEASYESESESESEAGPGTQRPGTG) is disordered. LRR repeat units follow at residues 150 to 170 (KLEE…TNLP), 172 to 193 (TLKV…CAHP), 196 to 215 (GLQH…ESLY), and 223 to 244 (NLVS…VTSL). An LRRCT domain is found at 258–296 (NPLALVPYYRGLTIDSLAQLCVLDDITVSPNEKHLFRGL). Residues 512-554 (LSAKKGKGEKDKKGKEKDRTGKGEKEPAKEWKVLKKKKEPPKE) form a disordered region. A compositionally biased stretch (basic and acidic residues) spans 517 to 544 (GKGEKDKKGKEKDRTGKGEKEPAKEWKV).

The chain is Leucine-rich repeat-containing protein 43 (LRRC43) from Homo sapiens (Human).